We begin with the raw amino-acid sequence, 506 residues long: D-alanine--D-alanyl carrier protein ligase (506 aa).

152–153 (TS) is a binding site for ATP. D197 is a binding site for D-alanine. An ATP-binding site is contributed by 292-297 (NTYGPT). D-alanine is bound at residue V301. Residues D383, 395–398 (YRGR), and K494 each bind ATP. K494 is a binding site for D-alanine.

It belongs to the ATP-dependent AMP-binding enzyme family. DltA subfamily.

It localises to the cytoplasm. The catalysed reaction is holo-[D-alanyl-carrier protein] + D-alanine + ATP = D-alanyl-[D-alanyl-carrier protein] + AMP + diphosphate. Its pathway is cell wall biogenesis; lipoteichoic acid biosynthesis. Catalyzes the first step in the D-alanylation of lipoteichoic acid (LTA), the activation of D-alanine and its transfer onto the D-alanyl carrier protein (Dcp) DltC. In an ATP-dependent two-step reaction, forms a high energy D-alanyl-AMP intermediate, followed by transfer of the D-alanyl residue as a thiol ester to the phosphopantheinyl prosthetic group of the Dcp. D-alanylation of LTA plays an important role in modulating the properties of the cell wall in Gram-positive bacteria, influencing the net charge of the cell wall. This chain is D-alanine--D-alanyl carrier protein ligase, found in Lacticaseibacillus casei (strain BL23) (Lactobacillus casei).